Consider the following 537-residue polypeptide: Extracellular exo-inulinase inuE (537 aa).

Residues 1 to 19 (MARLLKAVTVCALAGIAHA) form the signal peptide. Asp-41 is a catalytic residue. Asn-49, Asn-67, Asn-112, Asn-300, Asn-363, Asn-398, Asn-430, and Asn-531 each carry an N-linked (GlcNAc...) asparagine glycan.

This sequence belongs to the glycosyl hydrolase 32 family.

Its subcellular location is the secreted. It carries out the reaction Hydrolysis of terminal, non-reducing (2-&gt;1)- and (2-&gt;6)-linked beta-D-fructofuranose residues in fructans.. Its function is as follows. Exo-inulinase involved in utilization of the plant storage polymer inulin, consisting of fructooligosaccharides with a degree of polymerization (DP) value from 2 to 60. Splits off terminal fructose units successively from the non-reducing end of the inulin molecule, and also hydrolyze sucrose and raffinose. The protein is Extracellular exo-inulinase inuE (inuE) of Aspergillus niger (strain ATCC MYA-4892 / CBS 513.88 / FGSC A1513).